The sequence spans 122 residues: Large ribosomal subunit protein uL14 (122 aa).

This sequence belongs to the universal ribosomal protein uL14 family. Part of the 50S ribosomal subunit. Forms a cluster with proteins L3 and L19. In the 70S ribosome, L14 and L19 interact and together make contacts with the 16S rRNA in bridges B5 and B8.

Binds to 23S rRNA. Forms part of two intersubunit bridges in the 70S ribosome. This chain is Large ribosomal subunit protein uL14, found in Cellvibrio japonicus (strain Ueda107) (Pseudomonas fluorescens subsp. cellulosa).